A 375-amino-acid chain; its full sequence is STAGKVIKCKAAVLWEANKPFSLEEVEVAPPKAHEVRIKIVATGICRSDDHVVTGALAMPFPVILGHEAAGVVESVGEKVTLLKPGDAVIPLFVPQCGECRSCLSTKGNLCIKNDLSSSPTGLMADGTTRFTCKGKAIHHFIGTSTFTEYTVVHETAAAKIDSAAPLEKVCLIGCGFSTGYGAVLQTAKVEPGSTCAVFGLGGVGLSVVMGCKAAGASRIIAIDINKDKFAKAKELGATECVNPKDFKKPIHEVLTEMTGKGVDYSFEVIGRIETMTEALASCHYNYGVSVIVGVPPAAQKISFDPMLIFSGRTWKGSVFGGWKSKDAVPKLVADYMKKKFVLDPLITHTLPFTKINEGFDLLRTGKSIRTVLVL.

At Ser-1 the chain carries N-acetylserine. Zn(2+)-binding residues include Cys-46, His-67, Cys-97, Cys-100, Cys-103, Cys-111, and Cys-175. NAD(+) is bound by residues 200–205 (GLGGVG), Asp-224, Lys-229, 293–295 (VGV), and Arg-370.

This sequence belongs to the zinc-containing alcohol dehydrogenase family. Class-I subfamily. In terms of assembly, homodimer. The cofactor is Zn(2+).

It localises to the cytoplasm. It carries out the reaction a primary alcohol + NAD(+) = an aldehyde + NADH + H(+). The catalysed reaction is a secondary alcohol + NAD(+) = a ketone + NADH + H(+). The sequence is that of Alcohol dehydrogenase 1 (ADH1) from Coturnix japonica (Japanese quail).